A 557-amino-acid polypeptide reads, in one-letter code: Vacuolar protein sorting-associated protein 30 (557 aa).

Disordered regions lie at residues 93–149 and 218–238; these read DDDN…ENQQ and NKEI…SEKE. The span at 135–147 shows a compositional bias: acidic residues; that stretch reads DEEEQEATDEDEN. Phosphothreonine is present on Thr-142. A coiled-coil region spans residues 189–322; it reads LINRLKSEYD…QLDKLRKINI (134 aa). A BARA region spans residues 320–539; sequence INIFNATFKI…LAFSSNLLSK (220 aa). The required for membrane-association, autophagic function during starvation and normal autophagosome morphology stretch occupies residues 515 to 540; it reads WTTAMKFLLTNVKWLLAFSSNLLSKS.

It belongs to the beclin family. In terms of assembly, component of the autophagy-specific VPS34 PI3-kinase complex I composed of VPS15, VPS30, VPS34, ATG14 and ATG38; and of the VPS34 PI3-kinase complex II composed of VPS15, VPS30, VPS34 and VPS38.

It is found in the endosome membrane. The protein localises to the vacuole membrane. Its subcellular location is the preautophagosomal structure membrane. Functionally, required for cytoplasm to vacuole transport (Cvt), autophagy, nucleophagy, and mitophagy, as a part of the autophagy-specific VPS34 PI3-kinase complex I. This complex is essential to recruit the ATG8-phosphatidylinositol conjugate and the ATG12-ATG5 conjugate to the pre-autophagosomal structure. Also involved in endosome-to-Golgi retrograde transport as part of the VPS34 PI3-kinase complex II. This second complex is required for the endosome-to-Golgi retrieval of PEP1 and KEX2, and the recruitment of VPS5 and VPS7, two components of the retromer complex, to endosomal membranes (probably through the synthesis of a specific pool of phosphatidylinositol 3-phosphate recruiting the retromer to the endosomes). Also plays a role in regulation of filamentous growth. The polypeptide is Vacuolar protein sorting-associated protein 30 (Saccharomyces cerevisiae (strain ATCC 204508 / S288c) (Baker's yeast)).